Consider the following 181-residue polypeptide: MKQLLDFLPLIIFFTVYKLVDIYTATGALIAATAVQIAILYFVYKKVEKMHLVTFAMVTVFGTLTLAFHDDAFIKWKVTIIYSLFAIALAVSQIMNKSIIKAMLGKELKADDNIWARVTWYWALFFIGCGVLNVYVAFSLPLETWVNFKVFGLTALTLLNTVISVFYIYKHAQPEQDDTAN.

Transmembrane regions (helical) follow at residues 22 to 42 (IYTA…ILYF), 50 to 70 (MHLV…AFHD), 72 to 92 (AFIK…LAVS), 118 to 138 (VTWY…YVAF), and 148 to 168 (FKVF…VFYI).

This sequence belongs to the YciB family.

It localises to the cell inner membrane. Functionally, plays a role in cell envelope biogenesis, maintenance of cell envelope integrity and membrane homeostasis. This is Inner membrane-spanning protein YciB from Shewanella denitrificans (strain OS217 / ATCC BAA-1090 / DSM 15013).